Consider the following 25-residue polypeptide: SHYSEGPGQNLPFSVQNKXRLLGMM.

The tract at residues serine 1–methionine 25 is disordered.

The protein belongs to the cytochrome c oxidase VIIc family. As to quaternary structure, component of the cytochrome c oxidase (complex IV, CIV), a multisubunit enzyme composed of 14 subunits. The complex is composed of a catalytic core of 3 subunits MT-CO1, MT-CO2 and MT-CO3, encoded in the mitochondrial DNA, and 11 supernumerary subunits COX4I, COX5A, COX5B, COX6A, COX6B, COX6C, COX7A, COX7B, COX7C, COX8 and NDUFA4, which are encoded in the nuclear genome. The complex exists as a monomer or a dimer and forms supercomplexes (SCs) in the inner mitochondrial membrane with NADH-ubiquinone oxidoreductase (complex I, CI) and ubiquinol-cytochrome c oxidoreductase (cytochrome b-c1 complex, complex III, CIII), resulting in different assemblies (supercomplex SCI(1)III(2)IV(1) and megacomplex MCI(2)III(2)IV(2)). Interacts with RAB5IF.

The protein resides in the mitochondrion inner membrane. Its pathway is energy metabolism; oxidative phosphorylation. Component of the cytochrome c oxidase, the last enzyme in the mitochondrial electron transport chain which drives oxidative phosphorylation. The respiratory chain contains 3 multisubunit complexes succinate dehydrogenase (complex II, CII), ubiquinol-cytochrome c oxidoreductase (cytochrome b-c1 complex, complex III, CIII) and cytochrome c oxidase (complex IV, CIV), that cooperate to transfer electrons derived from NADH and succinate to molecular oxygen, creating an electrochemical gradient over the inner membrane that drives transmembrane transport and the ATP synthase. Cytochrome c oxidase is the component of the respiratory chain that catalyzes the reduction of oxygen to water. Electrons originating from reduced cytochrome c in the intermembrane space (IMS) are transferred via the dinuclear copper A center (CU(A)) of subunit 2 and heme A of subunit 1 to the active site in subunit 1, a binuclear center (BNC) formed by heme A3 and copper B (CU(B)). The BNC reduces molecular oxygen to 2 water molecules using 4 electrons from cytochrome c in the IMS and 4 protons from the mitochondrial matrix. The sequence is that of Cytochrome c oxidase polypeptide VIIc from Oncorhynchus mykiss (Rainbow trout).